The chain runs to 264 residues: Thymidylate synthase (264 aa).

Residue Arg-21 participates in dUMP binding. Position 51 (His-51) interacts with (6R)-5,10-methylene-5,6,7,8-tetrahydrofolate. 126–127 (RR) lines the dUMP pocket. The active-site Nucleophile is Cys-146. Residues 166–169 (RSCD), Asn-177, and 207–209 (HLY) contribute to the dUMP site. A (6R)-5,10-methylene-5,6,7,8-tetrahydrofolate-binding site is contributed by Asp-169. Residue Ala-263 participates in (6R)-5,10-methylene-5,6,7,8-tetrahydrofolate binding.

Belongs to the thymidylate synthase family. Bacterial-type ThyA subfamily. Homodimer.

It is found in the cytoplasm. It carries out the reaction dUMP + (6R)-5,10-methylene-5,6,7,8-tetrahydrofolate = 7,8-dihydrofolate + dTMP. The protein operates within pyrimidine metabolism; dTTP biosynthesis. Functionally, catalyzes the reductive methylation of 2'-deoxyuridine-5'-monophosphate (dUMP) to 2'-deoxythymidine-5'-monophosphate (dTMP) while utilizing 5,10-methylenetetrahydrofolate (mTHF) as the methyl donor and reductant in the reaction, yielding dihydrofolate (DHF) as a by-product. This enzymatic reaction provides an intracellular de novo source of dTMP, an essential precursor for DNA biosynthesis. The chain is Thymidylate synthase from Escherichia coli O9:H4 (strain HS).